Reading from the N-terminus, the 800-residue chain is Nuclear cap-binding protein subunit 1 (800 aa).

Residues 1-26 (MSRRRAHDTEDEGYDHRRNKRRRVSE) are disordered. Threonine 9 carries the post-translational modification Phosphothreonine. The MIF4G domain occupies 31–243 (EDRLESLILR…CLWAQIRKLR (213 aa)). Residues 669-700 (LAKADSSSSDSEDDSSHKRKKPITHADKPSEE) are disordered.

Belongs to the NCBP1 family. As to quaternary structure, component of the nuclear cap-binding complex (CBC), a heterodimer composed of Cbp80 and Cbp20 that interacts with m7GpppG-capped RNA.

The protein localises to the nucleus. In terms of biological role, component of the cap-binding complex (CBC), which binds cotranscriptionally to the 5'-cap of pre-mRNAs and is involved in various processes such as pre-mRNA splicing and RNA-mediated gene silencing (RNAi). The CBC complex is involved in miRNA-mediated RNA interference via its interaction with Ars2 and is required for primary microRNAs (miRNAs) processing. Also involved in innate immunity via the short interfering RNAs (siRNAs) processing machinery by restricting the viral RNA production. In the CBC complex, Cbp80 does not bind directly capped RNAs (m7GpppG-capped RNA) but is required to stabilize the movement of the N-terminal loop of Cbp20 and lock the CBC into a high affinity cap-binding state with the cap structure. The protein is Nuclear cap-binding protein subunit 1 (Cbp80) of Drosophila melanogaster (Fruit fly).